We begin with the raw amino-acid sequence, 610 residues long: C4b-binding protein alpha chain (610 aa).

A signal peptide spans 1–48 (MKHQRVPVMILHSKGTMASWPFSRLWSISDPILFQVTLVATLLATVLG). Sushi domains are found at residues 49 to 109 (SCGI…FCVK), 110 to 171 (KRCE…QCII), 172 to 236 (AKCE…SCKK), 237 to 296 (VICV…TCEL), 297 to 364 (NGCL…ECKE), 365 to 427 (VCCP…ECRP), 428 to 485 (DCKS…QCKA), and 486 to 543 (LCLK…KCEW). 16 cysteine pairs are disulfide-bonded: Cys50–Cys95, Cys80–Cys107, Cys112–Cys153, Cys139–Cys169, Cys174–Cys217, Cys203–Cys234, Cys239–Cys281, Cys267–Cys294, Cys299–Cys350, Cys334–Cys362, Cys367–Cys412, Cys402–Cys425, Cys429–Cys471, Cys457–Cys483, Cys487–Cys528, and Cys514–Cys541. Asn66 carries an N-linked (GlcNAc...) asparagine glycan. N-linked (GlcNAc...) asparagine glycosylation occurs at Asn221. Asn525 and Asn602 each carry an N-linked (GlcNAc...) asparagine glycan.

As to quaternary structure, disulfide-linked complex of alpha and beta chains.

It is found in the secreted. Its function is as follows. Controls the classical pathway of complement activation. It binds as a cofactor to C3b/C4b inactivator (C3bINA), which then hydrolyzes the complement fragment C4b. It also accelerates the degradation of the C4bC2a complex (C3 convertase) by dissociating the complement fragment C2a. Alpha chain binds C4b. It also interacts with serum amyloid P component. In Bos taurus (Bovine), this protein is C4b-binding protein alpha chain (C4BPA).